The chain runs to 367 residues: Undecaprenyl-phosphate alpha-N-acetylglucosaminyl 1-phosphate transferase (367 aa).

The next 9 helical transmembrane spans lie at 3 to 23 (LLTA…FIFL), 45 to 65 (GVIP…MFGL), 69 to 89 (YIPH…VGAM), 129 to 149 (WELV…WAAI), 158 to 178 (IDGL…LILW), 187 to 207 (MWCF…LGIL), 213 to 233 (VFMG…LLLE), 242 to 262 (ISPV…VAIM), and 318 to 338 (VPEW…GYCI).

This sequence belongs to the glycosyltransferase 4 family. WecA subfamily. Mg(2+) serves as cofactor. The cofactor is Mn(2+).

Its subcellular location is the cell inner membrane. The enzyme catalyses di-trans,octa-cis-undecaprenyl phosphate + UDP-N-acetyl-alpha-D-glucosamine = N-acetyl-alpha-D-glucosaminyl-di-trans,octa-cis-undecaprenyl diphosphate + UMP. Its pathway is bacterial outer membrane biogenesis; LPS O-antigen biosynthesis. It functions in the pathway bacterial outer membrane biogenesis; enterobacterial common antigen biosynthesis. In terms of biological role, catalyzes the transfer of the GlcNAc-1-phosphate moiety from UDP-GlcNAc onto the carrier lipid undecaprenyl phosphate (C55-P), yielding GlcNAc-pyrophosphoryl-undecaprenyl (GlcNAc-PP-C55). The sequence is that of Undecaprenyl-phosphate alpha-N-acetylglucosaminyl 1-phosphate transferase from Salmonella typhi.